The following is a 200-amino-acid chain: UPF0301 protein BR0480/BS1330_I0481 (200 aa).

Belongs to the UPF0301 (AlgH) family.

The sequence is that of UPF0301 protein BR0480/BS1330_I0481 from Brucella suis biovar 1 (strain 1330).